The chain runs to 264 residues: MICOS complex subunit MIC27 (264 aa).

Residues 1–27 (MAALRMGKLTTMPTGLIYASISVHVAK) constitute a mitochondrion transit peptide. The Mitochondrial intermembrane portion of the chain corresponds to 28–110 (EEESKKQLVK…YVYLKNPPRD (83 aa)). A helical transmembrane segment spans residues 111–129 (FLPKIGVITVSGLAGFISA). Residues 130–137 (RKGSRFKR) are Mitochondrial matrix-facing. A helical transmembrane segment spans residues 138-155 (IAYPLGLATLGATVCYPV). Topologically, residues 156–264 (QSVIIAKVAG…EDIDMYSTRS (109 aa)) are mitochondrial intermembrane. Residues 189 to 198 (KLPEHKEKTK) are compositionally biased toward basic and acidic residues. Positions 189–264 (KLPEHKEKTK…EDIDMYSTRS (76 aa)) are disordered. The segment covering 223–238 (AELSSETKTKSTSGAT) has biased composition (low complexity). Basic and acidic residues predominate over residues 245–256 (KLMDHGQSHPED).

It belongs to the apolipoprotein O/MICOS complex subunit Mic27 family. In terms of assembly, component of the mitochondrial contact site and cristae organizing system (MICOS) complex, composed of at least MICOS10/MIC10, CHCHD3/MIC19, CHCHD6/MIC25, APOOL/MIC27, IMMT/MIC60, APOO/MIC23/MIC26 and QIL1/MIC13. This complex was also known under the names MINOS or MitOS complex. The MICOS complex associates with mitochondrial outer membrane proteins SAMM50, MTX1 and MTX2 (together described as components of the mitochondrial outer membrane sorting assembly machinery (SAM) complex) and DNAJC11, mitochondrial inner membrane protein TMEM11 and with HSPA9. The MICOS and SAM complexes together with DNAJC11 are part of a large protein complex spanning both membranes termed the mitochondrial intermembrane space bridging (MIB) complex. Interacts with MICOS10/MIC10, IMMT/MIC60 and APOO/MIC23/MIC26.

Its subcellular location is the mitochondrion inner membrane. The protein resides in the mitochondrion. In terms of biological role, component of the MICOS complex, a large protein complex of the mitochondrial inner membrane that plays crucial roles in the maintenance of crista junctions, inner membrane architecture, and formation of contact sites to the outer membrane. Specifically binds to cardiolipin (in vitro) but not to the precursor lipid phosphatidylglycerol. Plays a crucial role in crista junction formation and mitochondrial function. The sequence is that of MICOS complex subunit MIC27 (APOL) from Bos taurus (Bovine).